Reading from the N-terminus, the 369-residue chain is Ribonuclease 3 (369 aa).

The region spanning 6–142 (IGFVQSSINY…IIGAVAADCD (137 aa)) is the RNase III domain. Residue E46 coordinates Mg(2+). D50 is a catalytic residue. The Mg(2+) site is built by D128 and E131. The active site involves E131. Residues 272-341 (NPASTLHELF…SLKLLKFIAK (70 aa)) form the DRBM domain.

It belongs to the ribonuclease III family. In terms of assembly, homodimer. Mg(2+) is required as a cofactor.

The protein localises to the cytoplasm. The catalysed reaction is Endonucleolytic cleavage to 5'-phosphomonoester.. Functionally, digests double-stranded RNA. Involved in the processing of primary rRNA transcript to yield the immediate precursors to the large and small rRNAs (23S and 16S). Processes some mRNAs, and tRNAs when they are encoded in the rRNA operon. Processes pre-crRNA and tracrRNA of type II CRISPR loci if present in the organism. The protein is Ribonuclease 3 (rnc) of Treponema succinifaciens (strain ATCC 33096 / DSM 2489 / 6091).